Here is a 614-residue protein sequence, read N- to C-terminus: Chaperone protein DnaK (614 aa).

Thr-173 carries the post-translational modification Phosphothreonine; by autocatalysis. Basic and acidic residues-rich tracts occupy residues 490–509 (EENAEADKKRREESDLRNEA) and 529–542 (EEDKQNAEDKKEAL). Disordered regions lie at residues 490 to 510 (EENAEADKKRREESDLRNEAD), 524 to 555 (GENISEEDKQNAEDKKEALKSALEGEDIDDIK), and 575 to 614 (QAAQAQQQAQGEDANASQDSNVEDADFKEVKDDDNQDNQK). A compositionally biased stretch (low complexity) spans 575-584 (QAAQAQQQAQ). Basic and acidic residues predominate over residues 599-614 (ADFKEVKDDDNQDNQK).

It belongs to the heat shock protein 70 family.

Acts as a chaperone. This is Chaperone protein DnaK from Staphylococcus saprophyticus subsp. saprophyticus (strain ATCC 15305 / DSM 20229 / NCIMB 8711 / NCTC 7292 / S-41).